Here is a 1530-residue protein sequence, read N- to C-terminus: B-cell CLL/lymphoma 9-like protein (1530 aa).

Disordered stretches follow at residues 1 to 101 (MHSE…VLEP), 155 to 187 (QGHS…TDLH), 246 to 353 (HISS…PSVL), 398 to 439 (SGTG…IGGG), 473 to 503 (QTQN…LSSP), 821 to 1076 (QNGR…QNPL), 1250 to 1279 (KGMS…SEVI), and 1310 to 1331 (SETM…QVSS). Positions 8–18 (SNHGKQVTSGA) are enriched in polar residues. The segment covering 19–34 (QSQLPNVNQAQQQAPA) has biased composition (low complexity). Over residues 81–93 (ERSVSIDTGDQRE) the composition is skewed to basic and acidic residues. Low complexity predominate over residues 156–165 (GHSGSSTTGH). Over residues 170 to 180 (GGPGLGSGHGP) the composition is skewed to gly residues. Composition is skewed to polar residues over residues 247 to 264 (ISSS…QSGT) and 278 to 287 (GTSTPSSTGH). Composition is skewed to low complexity over residues 409–426 (GPNG…NSND) and 485–503 (SLMG…LSSP). Polar residues-rich tracts occupy residues 875-891 (LSST…TGSR), 920-930 (QLKSPSLSQEP), and 944-953 (SPSQLPQSGP). Composition is skewed to low complexity over residues 960 to 971 (AASGAGTPSSTS), 979 to 994 (GPSL…PGHL), and 1031 to 1060 (SSST…INPS). Residues 1258 to 1268 (PHQPDSFPPMP) show a composition bias toward pro residues.

It belongs to the BCL9 family.

It localises to the nucleus. In terms of biological role, transcriptional regulator that may act as an activator. Plays a role for mesoderm patterning in early embryogenesis. This Danio rerio (Zebrafish) protein is B-cell CLL/lymphoma 9-like protein (bcl9l).